The following is a 137-amino-acid chain: Large-conductance mechanosensitive channel (137 aa).

Helical transmembrane passes span 9–29 (AFAV…GAAF), 32–52 (IVSS…IGGV), 54–74 (FGDL…VVLA), and 79–99 (IQSI…VKVI).

Belongs to the MscL family. Homopentamer.

Its subcellular location is the cell inner membrane. Functionally, channel that opens in response to stretch forces in the membrane lipid bilayer. May participate in the regulation of osmotic pressure changes within the cell. In Pseudomonas fluorescens (strain ATCC BAA-477 / NRRL B-23932 / Pf-5), this protein is Large-conductance mechanosensitive channel.